Reading from the N-terminus, the 465-residue chain is Pancreatic triacylglycerol lipase (465 aa).

A signal peptide spans 1 to 16 (MLMLWTFAVLLGAVAG). Cystine bridges form between Cys-20-Cys-26 and Cys-107-Cys-118. The active-site Nucleophile is the Ser-169. Residue Asp-193 is the Charge relay system of the active site. 4 residues coordinate Ca(2+): Glu-204, Arg-207, Asp-209, and Asp-212. Residues Cys-254 and Cys-278 are joined by a disulfide bond. His-280 acts as the Charge relay system in catalysis. 3 disulfide bridges follow: Cys-302/Cys-313, Cys-316/Cys-321, and Cys-449/Cys-465. In terms of domain architecture, PLAT spans 355-465 (WRYQVTVTLS…EDVLLTLSPC (111 aa)).

This sequence belongs to the AB hydrolase superfamily. Lipase family. Forms a 1:1 stoichiometric complex with (pro)colipase/CLPS. In terms of tissue distribution, pancreas.

Its subcellular location is the secreted. It catalyses the reaction a triacylglycerol + H2O = a diacylglycerol + a fatty acid + H(+). The enzyme catalyses 1,2,3-tri-(9Z-octadecenoyl)-glycerol + H2O = di-(9Z)-octadecenoylglycerol + (9Z)-octadecenoate + H(+). It carries out the reaction 1,2,3-tributanoylglycerol + H2O = dibutanoylglycerol + butanoate + H(+). The catalysed reaction is all-trans-retinyl hexadecanoate + H2O = all-trans-retinol + hexadecanoate + H(+). It catalyses the reaction 1,2-di-(9Z-octadecenoyl)-glycerol + H2O = (9Z-octadecenoyl)-glycerol + (9Z)-octadecenoate + H(+). With respect to regulation, inhibited by bile salts, is reactivated by (pro)colipase/CLPS. In terms of biological role, plays an important role in fat metabolism. It preferentially splits the esters of long-chain fatty acids at positions 1 and 3, producing mainly 2-monoacylglycerol and free fatty acids, and shows considerably higher activity against insoluble emulsified substrates than against soluble ones. The chain is Pancreatic triacylglycerol lipase from Mus musculus (Mouse).